We begin with the raw amino-acid sequence, 495 residues long: Nuclear receptor subfamily 6 group A member 1 (495 aa).

The disordered stretch occupies residues 1–34 (MERDERPPSGGGGGGGSAGFLEPPAALPPPPRNG). The span at 9 to 18 (SGGGGGGGSA) shows a compositional bias: gly residues. A DNA-binding region (nuclear receptor) is located at residues 72–147 (QRTCLICGDR…MGMNRKAIRE (76 aa)). Zn(2+) is bound by residues Cys75, Cys78, Cys92, Cys95, Cys111, Cys117, Cys127, and Cys130. 2 consecutive NR C4-type zinc fingers follow at residues 75–95 (CLICGDRATGLHYGIISCEGC) and 111–135 (CSRDKNCVMSRKQRNRCQYCRLLKC). 2 disordered regions span residues 145 to 165 (IREDGMPGGRNKSIGPVQISE) and 177 to 214 (FEEEANHWSNHGDSDHSSPGNRASESNQPSPGSTLSSS). The span at 180-192 (EANHWSNHGDSDH) shows a compositional bias: basic and acidic residues. The tract at residues 187 to 268 (HGDSDHSSPG…RSLDPQSYSL (82 aa)) is sufficient for interaction with UIMC1. A compositionally biased stretch (low complexity) spans 202–214 (SNQPSPGSTLSSS). An NR LBD domain is found at 264-495 (QSYSLIHQLM…HSCKTSTVKE (232 aa)).

The protein belongs to the nuclear hormone receptor family. NR6 subfamily. As to quaternary structure, homodimer. Interacts with UIMC1. As to expression, expressed in the germ cells of both the adult testis and ovary, being most abundant in spermatids.

Its subcellular location is the nucleus. Its function is as follows. Orphan nuclear receptor that binds to a response element containing the sequence 5'-TCAAGGTCA-3'. Acts as a regulator of embryonic stem cell pluripotency by mediating repression of POU5F1/OCT4: binds to the DR0 element within the POU5F1/OCT4 promoter and inhibits POU5F1/OCT4 expression during embryonic stem cell differentiation. Required to restrict POU5F1/OCT4 expression to the germ cell lineage. Involved in the regulation of gene expression in germ cell development during gametogenesis. The polypeptide is Nuclear receptor subfamily 6 group A member 1 (Nr6a1) (Mus musculus (Mouse)).